A 357-amino-acid polypeptide reads, in one-letter code: Sulfate/thiosulfate import ATP-binding protein CysA (357 aa).

The 235-residue stretch at 3 to 237 (IQIQGVSKQY…PASPFVYDFL (235 aa)) folds into the ABC transporter domain. 35–42 (GPSGSGKT) contributes to the ATP binding site.

Belongs to the ABC transporter superfamily. Sulfate/tungstate importer (TC 3.A.1.6) family. The complex is composed of two ATP-binding proteins (CysA), two transmembrane proteins (CysT and CysW) and a solute-binding protein (CysP).

The protein resides in the cell membrane. The enzyme catalyses sulfate(out) + ATP + H2O = sulfate(in) + ADP + phosphate + H(+). It catalyses the reaction thiosulfate(out) + ATP + H2O = thiosulfate(in) + ADP + phosphate + H(+). In terms of biological role, part of the ABC transporter complex CysAWTP involved in sulfate/thiosulfate import. Responsible for energy coupling to the transport system. The protein is Sulfate/thiosulfate import ATP-binding protein CysA of Bacillus cereus (strain ATCC 14579 / DSM 31 / CCUG 7414 / JCM 2152 / NBRC 15305 / NCIMB 9373 / NCTC 2599 / NRRL B-3711).